A 344-amino-acid chain; its full sequence is Holliday junction branch migration complex subunit RuvB (344 aa).

The large ATPase domain (RuvB-L) stretch occupies residues 1 to 181 (MERIVTPAEM…FGVLCAMEYY (181 aa)). Residues Leu-20, Arg-21, Gly-62, Lys-65, Thr-66, Thr-67, 128–130 (EDY), Arg-171, Tyr-181, and Arg-218 each bind ATP. Thr-66 is a Mg(2+) binding site. Residues 182–252 (DENQLKEIVI…EAREALELLE (71 aa)) are small ATPAse domain (RuvB-S). The head domain (RuvB-H) stretch occupies residues 255–344 (NQGFDKVDNK…SNKGQTSFFK (90 aa)). DNA is bound by residues Arg-310 and Arg-315.

It belongs to the RuvB family. Homohexamer. Forms an RuvA(8)-RuvB(12)-Holliday junction (HJ) complex. HJ DNA is sandwiched between 2 RuvA tetramers; dsDNA enters through RuvA and exits via RuvB. An RuvB hexamer assembles on each DNA strand where it exits the tetramer. Each RuvB hexamer is contacted by two RuvA subunits (via domain III) on 2 adjacent RuvB subunits; this complex drives branch migration. In the full resolvosome a probable DNA-RuvA(4)-RuvB(12)-RuvC(2) complex forms which resolves the HJ.

It is found in the cytoplasm. The catalysed reaction is ATP + H2O = ADP + phosphate + H(+). Its function is as follows. The RuvA-RuvB-RuvC complex processes Holliday junction (HJ) DNA during genetic recombination and DNA repair, while the RuvA-RuvB complex plays an important role in the rescue of blocked DNA replication forks via replication fork reversal (RFR). RuvA specifically binds to HJ cruciform DNA, conferring on it an open structure. The RuvB hexamer acts as an ATP-dependent pump, pulling dsDNA into and through the RuvAB complex. RuvB forms 2 homohexamers on either side of HJ DNA bound by 1 or 2 RuvA tetramers; 4 subunits per hexamer contact DNA at a time. Coordinated motions by a converter formed by DNA-disengaged RuvB subunits stimulates ATP hydrolysis and nucleotide exchange. Immobilization of the converter enables RuvB to convert the ATP-contained energy into a lever motion, pulling 2 nucleotides of DNA out of the RuvA tetramer per ATP hydrolyzed, thus driving DNA branch migration. The RuvB motors rotate together with the DNA substrate, which together with the progressing nucleotide cycle form the mechanistic basis for DNA recombination by continuous HJ branch migration. Branch migration allows RuvC to scan DNA until it finds its consensus sequence, where it cleaves and resolves cruciform DNA. The protein is Holliday junction branch migration complex subunit RuvB of Clostridium botulinum (strain Alaska E43 / Type E3).